The chain runs to 215 residues: Phosphoenolpyruvate guanylyltransferase (215 aa).

The phosphoenolpyruvate site is built by Thr144, Gly159, and Ser162.

The protein belongs to the CofC family.

The enzyme catalyses phosphoenolpyruvate + GTP + H(+) = enolpyruvoyl-2-diphospho-5'-guanosine + diphosphate. It functions in the pathway cofactor biosynthesis; coenzyme F420 biosynthesis. Functionally, guanylyltransferase that catalyzes the activation of phosphoenolpyruvate (PEP) as enolpyruvoyl-2-diphospho-5'-guanosine, via the condensation of PEP with GTP. It is involved in the biosynthesis of coenzyme F420, a hydride carrier cofactor. This Geodermatophilus obscurus (strain ATCC 25078 / DSM 43160 / JCM 3152 / CCUG 61914 / KCC A-0152 / KCTC 9177 / NBRC 13315 / NRRL B-3577 / G-20) protein is Phosphoenolpyruvate guanylyltransferase.